A 315-amino-acid polypeptide reads, in one-letter code: Ester hydrolase C11orf54 homolog (315 aa).

Residues His-266, His-268, and His-278 each contribute to the Zn(2+) site.

As to quaternary structure, monomer. Zn(2+) serves as cofactor.

It is found in the nucleus. The protein localises to the cytoplasm. Its function is as follows. Exhibits ester hydrolase activity on the substrate p-nitrophenyl acetate, in vitro. Regulates DNA damage and repair by regulating HIF1A degradation via chaperone-mediated autophagy (CMA). The protein is Ester hydrolase C11orf54 homolog of Mus musculus (Mouse).